Reading from the N-terminus, the 189-residue chain is Transcription factor E (189 aa).

Residues Ala-9–Asn-101 enclose the HTH TFE/IIEalpha-type domain.

It belongs to the TFE family. Monomer. Interaction with RNA polymerase subunits RpoF and RpoE is necessary for Tfe stimulatory transcription activity. Able to interact with Tbp and RNA polymerase in the absence of DNA promoter. Interacts both with the preinitiation and elongation complexes.

Transcription factor that plays a role in the activation of archaeal genes transcribed by RNA polymerase. Facilitates transcription initiation by enhancing TATA-box recognition by TATA-box-binding protein (Tbp), and transcription factor B (Tfb) and RNA polymerase recruitment. Not absolutely required for transcription in vitro, but particularly important in cases where Tbp or Tfb function is not optimal. It dynamically alters the nucleic acid-binding properties of RNA polymerases by stabilizing the initiation complex and destabilizing elongation complexes. Seems to translocate with the RNA polymerase following initiation and acts by binding to the non template strand of the transcription bubble in elongation complexes. In Aeropyrum pernix (strain ATCC 700893 / DSM 11879 / JCM 9820 / NBRC 100138 / K1), this protein is Transcription factor E.